Consider the following 135-residue polypeptide: Succinate dehydrogenase assembly factor 2, mitochondrial (135 aa).

This sequence belongs to the SDHAF2 family. Interacts with the flavoprotein subunit within the SDH catalytic dimer.

It localises to the mitochondrion matrix. In terms of biological role, plays an essential role in the assembly of succinate dehydrogenase (SDH), an enzyme complex (also referred to as respiratory complex II) that is a component of both the tricarboxylic acid (TCA) cycle and the mitochondrial electron transport chain, and which couples the oxidation of succinate to fumarate with the reduction of ubiquinone (coenzyme Q) to ubiquinol. Required for flavinylation (covalent attachment of FAD) of the flavoprotein subunit of the SDH catalytic dimer. This chain is Succinate dehydrogenase assembly factor 2, mitochondrial, found in Meyerozyma guilliermondii (strain ATCC 6260 / CBS 566 / DSM 6381 / JCM 1539 / NBRC 10279 / NRRL Y-324) (Yeast).